The primary structure comprises 65 residues: Light-harvesting protein B800/830/1020 alpha-2 chain (65 aa).

The Cytoplasmic segment spans residues 1–13 (MWKLWKFVDFRMT). A helical membrane pass occupies residues 14 to 34 (AVGFHIFFALIAFAVHFACIS). A bacteriochlorophyll is bound at residue His-29. Residues 35–65 (SERFNWLEGAPAAEYYMDENPGIWKRTSYDG) lie on the Periplasmic side of the membrane.

It belongs to the antenna complex alpha subunit family. As to quaternary structure, the core complex is formed by different alpha and beta chains, binding bacteriochlorophyll molecules, and arranged most probably in tetrameric structures disposed around the reaction center. The non-pigmented gamma chains may constitute additional components.

It localises to the cell inner membrane. Its function is as follows. Antenna complexes are light-harvesting systems, which transfer the excitation energy to the reaction centers. The chain is Light-harvesting protein B800/830/1020 alpha-2 chain from Halorhodospira halochloris (Ectothiorhodospira halochloris).